A 424-amino-acid chain; its full sequence is Histidine--tRNA ligase (424 aa).

It belongs to the class-II aminoacyl-tRNA synthetase family. As to quaternary structure, homodimer.

Its subcellular location is the cytoplasm. It catalyses the reaction tRNA(His) + L-histidine + ATP = L-histidyl-tRNA(His) + AMP + diphosphate + H(+). This chain is Histidine--tRNA ligase, found in Shewanella woodyi (strain ATCC 51908 / MS32).